A 593-amino-acid polypeptide reads, in one-letter code: Serine/threonine-protein kinase PAK 4 (593 aa).

A CRIB domain is found at 11–24 (ISAPSNFEHRVHTG). The tract at residues 25-322 (FDQHEQKFTG…VVDPGDPRSY (298 aa)) is linker. The residue at position 41 (S41) is a Phosphoserine. K78 carries the N6-methyllysine modification. The disordered stretch occupies residues 95–303 (TRSNSLRRES…PQREPQRVSH (209 aa)). Phosphoserine is present on S104. Over residues 118–133 (LEERAAPARMAPDKAG) the composition is skewed to basic and acidic residues. S148 bears the Phosphoserine mark. Over residues 149–164 (GDRRRVGPEKRPKSSR) the composition is skewed to basic and acidic residues. S181 carries the post-translational modification Phosphoserine. A compositionally biased stretch (polar residues) spans 184 to 197 (DVSTPQPGSLTSGT). A Phosphothreonine modification is found at T187. S195 carries the phosphoserine modification. Residue T207 is modified to Phosphothreonine. Over residues 238–258 (AAPQSSSSSRPPTRARGAPSP) the composition is skewed to low complexity. 2 positions are modified to phosphoserine: S257 and S266. The segment covering 267-280 (EPQLAPPARALAAP) has biased composition (low complexity). The span at 281 to 292 (AVPPAPGPPGPR) shows a compositional bias: pro residues. Residue S293 is modified to Phosphoserine. Residues 294-303 (PQREPQRVSH) are compositionally biased toward basic and acidic residues. The Protein kinase domain occupies 323–574 (LDNFIKIGEG…AAELLKHPFL (252 aa)). ATP is bound by residues 329 to 337 (IGEGSTGIV) and K352. Catalysis depends on D442, which acts as the Proton acceptor. Phosphoserine; by autocatalysis is present on S476.

This sequence belongs to the protein kinase superfamily. STE Ser/Thr protein kinase family. STE20 subfamily. As to quaternary structure, interacts tightly with GTP-bound but not GDP-bound CDC42/p21 and weakly with RAC1. Interacts with FGFR2 and GRB2. Interacts with INKA1. Interacts with SH3RF2. Interacts with RHOU and PAXI; the PAK4-RHOU complex protects RHOU from ubiquitination and acts as a scaffold to suppport paxillin/PAXI phosphorylation. In terms of processing, autophosphorylated on serine residues when activated by CDC42/p21. Phosphorylated on tyrosine residues upon stimulation of FGFR2. Methylated by SETD6. Post-translationally, polyubiquitinated, leading to its proteasomal degradation.

The protein resides in the cytoplasm. It carries out the reaction L-seryl-[protein] + ATP = O-phospho-L-seryl-[protein] + ADP + H(+). The enzyme catalyses L-threonyl-[protein] + ATP = O-phospho-L-threonyl-[protein] + ADP + H(+). Its activity is regulated as follows. Inhibited by INKA1; which inhibits the serine/threonine-protein kinase activity by binding PAK4 in a substrate-like manner. Its function is as follows. Serine/threonine protein kinase that plays a role in a variety of different signaling pathways including cytoskeleton regulation, cell migration, growth, proliferation or cell survival. Activation by various effectors including growth factor receptors or active CDC42 and RAC1 results in a conformational change and a subsequent autophosphorylation on several serine and/or threonine residues. Phosphorylates and inactivates the protein phosphatase SSH1, leading to increased inhibitory phosphorylation of the actin binding/depolymerizing factor cofilin. Decreased cofilin activity may lead to stabilization of actin filaments. Phosphorylates LIMK1, a kinase that also inhibits the activity of cofilin. Phosphorylates integrin beta5/ITGB5 and thus regulates cell motility. Phosphorylates ARHGEF2 and activates the downstream target RHOA that plays a role in the regulation of assembly of focal adhesions and actin stress fibers. Stimulates cell survival by phosphorylating the BCL2 antagonist of cell death BAD. Alternatively, inhibits apoptosis by preventing caspase-8 binding to death domain receptors in a kinase independent manner. Plays a role in cell-cycle progression by controlling levels of the cell-cycle regulatory protein CDKN1A and by phosphorylating RAN. Promotes kinase-independent stabilization of RHOU, thereby contributing to focal adhesion disassembly during cell migration. This chain is Serine/threonine-protein kinase PAK 4, found in Mus musculus (Mouse).